The primary structure comprises 49 residues: SPbeta prophage-derived uncharacterized protein YoqT (49 aa).

A helical membrane pass occupies residues 7 to 29 (CFVNWSFDKIMDYILIAGLYFVF).

It is found in the cell membrane. This Bacillus subtilis (strain 168) protein is SPbeta prophage-derived uncharacterized protein YoqT (yoqT).